We begin with the raw amino-acid sequence, 355 residues long: Ribosomal RNA small subunit methyltransferase H (355 aa).

Residues 47–49, aspartate 65, phenylalanine 92, aspartate 113, and glutamine 120 contribute to the S-adenosyl-L-methionine site; that span reads GGY. Positions 332-355 are disordered; the sequence is LLPLATLPETSHPKSASHSKSRRR. Residues 346–355 are compositionally biased toward basic residues; the sequence is SASHSKSRRR.

Belongs to the methyltransferase superfamily. RsmH family.

It localises to the cytoplasm. It catalyses the reaction cytidine(1402) in 16S rRNA + S-adenosyl-L-methionine = N(4)-methylcytidine(1402) in 16S rRNA + S-adenosyl-L-homocysteine + H(+). Specifically methylates the N4 position of cytidine in position 1402 (C1402) of 16S rRNA. In Beijerinckia indica subsp. indica (strain ATCC 9039 / DSM 1715 / NCIMB 8712), this protein is Ribosomal RNA small subunit methyltransferase H.